The sequence spans 953 residues: Isoleucine--tRNA ligase (953 aa).

The short motif at 58–68 (PYANGFIHLGH) is the 'HIGH' region element. Residue E573 coordinates L-isoleucyl-5'-AMP. The short motif at 614-618 (KMSKS) is the 'KMSKS' region element. Residue K617 participates in ATP binding. Positions 916, 919, 936, and 939 each coordinate Zn(2+).

The protein belongs to the class-I aminoacyl-tRNA synthetase family. IleS type 1 subfamily. Monomer. Zn(2+) serves as cofactor.

It is found in the cytoplasm. The enzyme catalyses tRNA(Ile) + L-isoleucine + ATP = L-isoleucyl-tRNA(Ile) + AMP + diphosphate. Functionally, catalyzes the attachment of isoleucine to tRNA(Ile). As IleRS can inadvertently accommodate and process structurally similar amino acids such as valine, to avoid such errors it has two additional distinct tRNA(Ile)-dependent editing activities. One activity is designated as 'pretransfer' editing and involves the hydrolysis of activated Val-AMP. The other activity is designated 'posttransfer' editing and involves deacylation of mischarged Val-tRNA(Ile). The protein is Isoleucine--tRNA ligase of Blochmanniella floridana.